The primary structure comprises 379 residues: Presenilin-associated rhomboid-like protein, mitochondrial (379 aa).

Residues Met1 to Gly52 constitute a mitochondrion transit peptide. Over Phe53–Pro101 the chain is Mitochondrial matrix. Residue Ser65 is modified to Phosphoserine. The residue at position 69 (Thr69) is a Phosphothreonine. Position 70 is a phosphoserine (Ser70). A helical membrane pass occupies residues Leu102–Tyr121. Residues Glu122–Arg167 lie on the Mitochondrial intermembrane side of the membrane. A helical transmembrane segment spans residues Thr168–Ser187. Topologically, residues Leu188 to Ser207 are mitochondrial matrix. A helical transmembrane segment spans residues Pro208 to Trp230. Over Ser231–Gln244 the chain is Mitochondrial intermembrane. Residues Phe245–Val262 form a helical membrane-spanning segment. Residues Gly263 to Pro272 are Mitochondrial matrix-facing. A helical transmembrane segment spans residues Ser273–Thr289. Ser277 functions as the Nucleophile in the catalytic mechanism. At Lys290–Arg295 the chain is on the mitochondrial intermembrane side. Residues Leu296–Met318 form a helical membrane-spanning segment. The Mitochondrial matrix portion of the chain corresponds to Asp319–His332. A helical membrane pass occupies residues Ala333–Trp354. His335 is a catalytic residue. Topologically, residues Lys355 to Lys379 are mitochondrial intermembrane.

It belongs to the peptidase S54 family. As to quaternary structure, interacts with PSEN1 and PSEN2. Binds OPA1. P-beta is proteolytically processed (beta-cleavage) in a PARL-dependent manner. The cleavage is inhibited when residues Ser-65, Thr-69 and Ser-70 are all phosphorylated.

It localises to the mitochondrion inner membrane. The protein localises to the nucleus. The enzyme catalyses Cleaves type-1 transmembrane domains using a catalytic dyad composed of serine and histidine that are contributed by different transmembrane domains.. Its function is as follows. Required for the control of apoptosis during postnatal growth. Essential for proteolytic processing of an antiapoptotic form of OPA1 which prevents the release of mitochondrial cytochrome c in response to intrinsic apoptotic signals. Required for the maturation of PINK1 into its 52kDa mature form after its cleavage by mitochondrial-processing peptidase (MPP). Promotes cleavage of serine/threonine-protein phosphatase PGAM5 in damaged mitochondria in response to loss of mitochondrial membrane potential. Mediates differential cleavage of PINK1 and PGAM5 depending on the health status of mitochondria, disassociating from PINK1 and associating with PGAM5 in response to mitochondrial membrane potential loss. Required for processing of CLPB into a form with higher protein disaggregase activity by removing an autoinhibitory N-terminal peptide. Promotes processing of DIABLO/SMAC in the mitochondrion which is required for DIABLO apoptotic activity. Also required for cleavage of STARD7 and TTC19. Promotes changes in mitochondria morphology regulated by phosphorylation of P-beta domain. The polypeptide is Presenilin-associated rhomboid-like protein, mitochondrial (PARL) (Homo sapiens (Human)).